The primary structure comprises 328 residues: Malate dehydrogenase (328 aa).

11–17 (GAAGQIG) contacts NAD(+). 2 residues coordinate substrate: Arg-92 and Arg-98. Residues Asn-105, Gln-112, and 129-131 (VGN) each bind NAD(+). Asn-131 and Arg-162 together coordinate substrate. His-187 functions as the Proton acceptor in the catalytic mechanism.

It belongs to the LDH/MDH superfamily. MDH type 2 family.

It catalyses the reaction (S)-malate + NAD(+) = oxaloacetate + NADH + H(+). In terms of biological role, catalyzes the reversible oxidation of malate to oxaloacetate. In Coxiella burnetii (strain CbuK_Q154) (Coxiella burnetii (strain Q154)), this protein is Malate dehydrogenase.